Consider the following 234-residue polypeptide: tRNA (guanine-N(1)-)-methyltransferase (234 aa).

S-adenosyl-L-methionine is bound by residues Gly115 and Val135–Leu140.

It belongs to the RNA methyltransferase TrmD family. In terms of assembly, homodimer.

It is found in the cytoplasm. It catalyses the reaction guanosine(37) in tRNA + S-adenosyl-L-methionine = N(1)-methylguanosine(37) in tRNA + S-adenosyl-L-homocysteine + H(+). In terms of biological role, specifically methylates guanosine-37 in various tRNAs. The protein is tRNA (guanine-N(1)-)-methyltransferase of Rickettsia akari (strain Hartford).